A 274-amino-acid polypeptide reads, in one-letter code: Formamidopyrimidine-DNA glycosylase (274 aa).

Pro2 functions as the Schiff-base intermediate with DNA in the catalytic mechanism. Residue Glu3 is the Proton donor of the active site. The active-site Proton donor; for beta-elimination activity is the Lys58. 3 residues coordinate DNA: His91, Arg110, and Lys152. The FPG-type zinc finger occupies 237–271 (KVYGRKNLPCLVCENKIETVVIAGRHSAFCPHCQP). Catalysis depends on Arg261, which acts as the Proton donor; for delta-elimination activity.

Belongs to the FPG family. As to quaternary structure, monomer. Requires Zn(2+) as cofactor.

It carries out the reaction Hydrolysis of DNA containing ring-opened 7-methylguanine residues, releasing 2,6-diamino-4-hydroxy-5-(N-methyl)formamidopyrimidine.. The enzyme catalyses 2'-deoxyribonucleotide-(2'-deoxyribose 5'-phosphate)-2'-deoxyribonucleotide-DNA = a 3'-end 2'-deoxyribonucleotide-(2,3-dehydro-2,3-deoxyribose 5'-phosphate)-DNA + a 5'-end 5'-phospho-2'-deoxyribonucleoside-DNA + H(+). Involved in base excision repair of DNA damaged by oxidation or by mutagenic agents. Acts as a DNA glycosylase that recognizes and removes damaged bases. Has a preference for oxidized purines, such as 7,8-dihydro-8-oxoguanine (8-oxoG). Has AP (apurinic/apyrimidinic) lyase activity and introduces nicks in the DNA strand. Cleaves the DNA backbone by beta-delta elimination to generate a single-strand break at the site of the removed base with both 3'- and 5'-phosphates. This chain is Formamidopyrimidine-DNA glycosylase, found in Legionella pneumophila (strain Lens).